Consider the following 197-residue polypeptide: MFDIGFGELLLVMVLGLIVLGPERLPVAVRTVASWIRTLRSLASTVQNELSQELKLQEFQESLKKVEKASLQNLSPELKASMDELKDAAEAMKRGYTETPSPQKSDDPKKSGDHSATVEPQSNIPLNDPEAAYDGVIEAETAVRPADSQQKPENAAVAENHNDGRHATSDEAVGNNNVKPEQSQPSAASARQPSDSR.

A helical transmembrane segment spans residues 1-21 (MFDIGFGELLLVMVLGLIVLG). The segment at 93 to 197 (KRGYTETPSP…ASARQPSDSR (105 aa)) is disordered. Composition is skewed to basic and acidic residues over residues 104–113 (KSDDPKKSGD) and 160–169 (NHNDGRHATS). Over residues 180–197 (PEQSQPSAASARQPSDSR) the composition is skewed to low complexity.

The protein belongs to the TatB family. In terms of assembly, the Tat system comprises two distinct complexes: a TatABC complex, containing multiple copies of TatA, TatB and TatC subunits, and a separate TatA complex, containing only TatA subunits. Substrates initially bind to the TatABC complex, which probably triggers association of the separate TatA complex to form the active translocon.

The protein localises to the cell inner membrane. Its function is as follows. Part of the twin-arginine translocation (Tat) system that transports large folded proteins containing a characteristic twin-arginine motif in their signal peptide across membranes. Together with TatC, TatB is part of a receptor directly interacting with Tat signal peptides. TatB may form an oligomeric binding site that transiently accommodates folded Tat precursor proteins before their translocation. The sequence is that of Sec-independent protein translocase protein TatB from Pectobacterium atrosepticum (strain SCRI 1043 / ATCC BAA-672) (Erwinia carotovora subsp. atroseptica).